The primary structure comprises 793 residues: Nuclear cap-binding protein subunit 1 (793 aa).

Disordered stretches follow at residues 1–30 (MSRRRHSDDSDDSDGQPHKRRRTSEPSEIE) and 668–692 (LARQHKRRDSDDDDRSSDREDGPLE). In terms of domain architecture, MIF4G spans 30–242 (EERLESLICR…CLWSQIQKLK (213 aa)). Residues 683–692 (SSDREDGPLE) are compositionally biased toward basic and acidic residues. Residues 686-716 (REDGPLEEQIERLQEKVESAQSEQKNLFLVI) are a coiled coil.

The protein belongs to the NCBP1 family. In terms of assembly, component of the nuclear cap-binding complex (CBC), a heterodimer composed of NCBP1/CBP80 and NCBP2/CBP20 that interacts with m7GpppG-capped RNA. Component of an alternative nuclear cap-binding complex (CBC) composed of NCBP1/CBP80 and NCBP3.

The protein resides in the nucleus. Its subcellular location is the cytoplasm. Its function is as follows. Component of the cap-binding complex (CBC), which binds cotranscriptionally to the 5'-cap of pre-mRNAs and is involved in various processes such as pre-mRNA splicing, translation regulation, nonsense-mediated mRNA decay, RNA-mediated gene silencing (RNAi) by microRNAs (miRNAs) and mRNA export. The CBC complex is involved in mRNA export from the nucleus, leading to the recruitment of the mRNA export machinery to the 5'-end of mRNA and to mRNA export in a 5' to 3' direction through the nuclear pore. The CBC complex is also involved in mediating U snRNA and intronless mRNAs export from the nucleus. The CBC complex is essential for a pioneer round of mRNA translation, before steady state translation when the CBC complex is replaced by cytoplasmic cap-binding protein eIF4E. The pioneer round of mRNA translation mediated by the CBC complex plays a central role in nonsense-mediated mRNA decay (NMD), NMD only taking place in mRNAs bound to the CBC complex, but not on eIF4E-bound mRNAs. The CBC complex enhances NMD in mRNAs containing at least one exon-junction complex (EJC), promoting the interaction between UPF1 and UPF2. The CBC complex is also involved in 'failsafe' NMD, which is independent of the EJC complex, while it does not participate in Staufen-mediated mRNA decay (SMD). During cell proliferation, the CBC complex is also involved in microRNAs (miRNAs) biogenesis via its interaction with SRRT/ARS2 and is required for miRNA-mediated RNA interference. The CBC complex also acts as a negative regulator of PARN, thereby acting as an inhibitor of mRNA deadenylation. In the CBC complex, NCBP1/CBP80 does not bind directly capped RNAs (m7GpppG-capped RNA) but is required to stabilize the movement of the N-terminal loop of NCBP2/CBP20 and lock the CBC into a high affinity cap-binding state with the cap structure. Associates with NCBP3 to form an alternative cap-binding complex (CBC) which plays a key role in mRNA export. The conventional CBC with NCBP2 binds both small nuclear RNA (snRNA) and messenger (mRNA) and is involved in their export from the nucleus whereas the alternative CBC with NCBP3 does not bind snRNA and associates only with mRNA thereby playing a role only in mRNA export. This Gallus gallus (Chicken) protein is Nuclear cap-binding protein subunit 1 (NCBP1).